Consider the following 207-residue polypeptide: Small ribosomal subunit protein uS4A (207 aa).

One can recognise an S4 RNA-binding domain in the interval 98–161 (RRLDNVVYRM…REHKRIKELA (64 aa)).

Belongs to the universal ribosomal protein uS4 family. Part of the 30S ribosomal subunit. Contacts protein S5. The interaction surface between S4 and S5 is involved in control of translational fidelity.

Its function is as follows. One of the primary rRNA binding proteins, it binds directly to 16S rRNA where it nucleates assembly of the body of the 30S subunit. Functionally, with S5 and S12 plays an important role in translational accuracy. This chain is Small ribosomal subunit protein uS4A, found in Symbiobacterium thermophilum (strain DSM 24528 / JCM 14929 / IAM 14863 / T).